Reading from the N-terminus, the 148-residue chain is UPF0178 protein EF_0842 (148 aa).

Belongs to the UPF0178 family.

The sequence is that of UPF0178 protein EF_0842 from Enterococcus faecalis (strain ATCC 700802 / V583).